A 229-amino-acid chain; its full sequence is 2-C-methyl-D-erythritol 4-phosphate cytidylyltransferase (229 aa).

It belongs to the IspD/TarI cytidylyltransferase family. IspD subfamily.

The catalysed reaction is 2-C-methyl-D-erythritol 4-phosphate + CTP + H(+) = 4-CDP-2-C-methyl-D-erythritol + diphosphate. It functions in the pathway isoprenoid biosynthesis; isopentenyl diphosphate biosynthesis via DXP pathway; isopentenyl diphosphate from 1-deoxy-D-xylulose 5-phosphate: step 2/6. Functionally, catalyzes the formation of 4-diphosphocytidyl-2-C-methyl-D-erythritol from CTP and 2-C-methyl-D-erythritol 4-phosphate (MEP). This chain is 2-C-methyl-D-erythritol 4-phosphate cytidylyltransferase, found in Neisseria meningitidis serogroup A / serotype 4A (strain DSM 15465 / Z2491).